The following is an 851-amino-acid chain: Pentatricopeptide repeat-containing protein At3g54980, mitochondrial (851 aa).

The N-terminal 26 residues, 1 to 26, are a transit peptide targeting the mitochondrion; it reads MRSLLVFRKIPSRIRLRNLRNNKPFC. 19 PPR repeats span residues 162-196, 197-231, 232-266, 267-301, 303-337, 338-372, 373-407, 408-438, 442-476, 477-511, 512-546, 547-577, 583-617, 618-652, 653-687, 688-722, 723-757, 758-792, and 793-827; these read NSRA…DVIP, FFPY…GVDG, DNVT…GAEP, DSLL…KLCV, SQET…GISM, NVVA…GPSP, NSVT…GLTP, SVFH…SFET, NVFV…GIGP, NVVS…GLKP, NNYT…NIEV, NGVV…MIEE, SCMS…GISP, NVIT…GVKL, DIPA…GLNP, SQPI…GLRC, DLGT…GLVP, DEII…NVTP, and NVLI…GILP.

It belongs to the PPR family. P subfamily.

It localises to the mitochondrion. The sequence is that of Pentatricopeptide repeat-containing protein At3g54980, mitochondrial from Arabidopsis thaliana (Mouse-ear cress).